Consider the following 239-residue polypeptide: Heptaprenylglyceryl phosphate synthase (239 aa).

Position 12 (Lys-12) interacts with sn-glycerol 1-phosphate. Positions 14 and 40 each coordinate Mg(2+). Residues 159 to 164, Gly-189, and 209 to 210 contribute to the sn-glycerol 1-phosphate site; these read YLEYSG and GN.

This sequence belongs to the GGGP/HepGP synthase family. Group I subfamily. In terms of assembly, homodimer. It depends on Mg(2+) as a cofactor.

The enzyme catalyses sn-glycerol 1-phosphate + all-trans-heptaprenyl diphosphate = 3-heptaprenyl-sn-glycero-1-phosphate + diphosphate. It participates in membrane lipid metabolism; glycerophospholipid metabolism. In terms of biological role, prenyltransferase that catalyzes in vivo the transfer of the heptaprenyl moiety of heptaprenyl pyrophosphate (HepPP; 35 carbon atoms) to the C3 hydroxyl of sn-glycerol-1-phosphate (G1P), producing heptaprenylglyceryl phosphate (HepGP). This reaction is an ether-bond-formation step in the biosynthesis of archaea-type G1P-based membrane lipids found in Bacillales. To a much lesser extent, is also able to use geranylgeranyl diphosphate (GGPP; C20) as the prenyl donor. The chain is Heptaprenylglyceryl phosphate synthase from Geobacillus kaustophilus (strain HTA426).